We begin with the raw amino-acid sequence, 225 residues long: Probable septum site-determining protein MinC (225 aa).

The disordered stretch occupies residues Pro-87–Pro-112. Positions Ala-91–Lys-108 are enriched in polar residues.

Belongs to the MinC family. In terms of assembly, interacts with MinD and FtsZ.

Cell division inhibitor that blocks the formation of polar Z ring septums. Rapidly oscillates between the poles of the cell to destabilize FtsZ filaments that have formed before they mature into polar Z rings. Prevents FtsZ polymerization. The sequence is that of Probable septum site-determining protein MinC from Prochlorococcus marinus (strain MIT 9313).